A 621-amino-acid chain; its full sequence is Endoglucanase 25 (621 aa).

The tract at residues 1 to 26 is disordered; that stretch reads MYGRDPWGGPLEINTADSATDDDRSR. Topologically, residues 1–70 are cytoplasmic; it reads MYGRDPWGGP…DLGCIIVSRK (70 aa). The interval 48-49 is polarized targeting signal 1 (PTS1); that stretch reads LL. The segment at 59–62 is polarized targeting signal 2 (PTS2); it reads YVDL. The chain crosses the membrane as a helical; Signal-anchor for type II membrane protein span at residues 71–91; sequence IFVWTVGTLVAAALLAGFITL. The Extracellular portion of the chain corresponds to 92–621; it reads IVKTVPRHHP…PPPPPAPWKP (530 aa). N-linked (GlcNAc...) asparagine glycosylation is found at Asn108 and Asn133. Asp165 functions as the Nucleophile in the catalytic mechanism. Asn216, Asn324, Asn345, Asn408, and Asn425 each carry an N-linked (GlcNAc...) asparagine glycan. Active-site residues include His513 and Asp561. An N-linked (GlcNAc...) asparagine glycan is attached at Asn567. Glu570 is an active-site residue.

This sequence belongs to the glycosyl hydrolase 9 (cellulase E) family. Post-translationally, glycosylated. N-glycosylation of KOR in the endoplasmic reticulum followed by N-glycan modifications in the Golgi are essential for catalytic activity. As to expression, highly expressed in roots and stems, at intermediate levels in leaves and flowers, and at lower levels in siliques. Expressed in xylem (at protein level).

It is found in the cell membrane. It carries out the reaction Endohydrolysis of (1-&gt;4)-beta-D-glucosidic linkages in cellulose, lichenin and cereal beta-D-glucans.. Its function is as follows. Required for cellulose microfibril formation. Involved in cell wall assembly during cell elongation and cell plate maturation in cytokinesis. Required for secondary cell wall formation in the developing xylem. May cycle through different intracellular compartments, including plasma membrane. The chain is Endoglucanase 25 (KOR) from Arabidopsis thaliana (Mouse-ear cress).